Here is a 485-residue protein sequence, read N- to C-terminus: GlcNAc-binding protein A (485 aa).

A signal peptide spans 1-29 (MKKQPQKTLLAIALSVVSGTAMSHGYVSA). The Chitin-binding type-4 domain maps to 30 to 200 (VENGVAEARV…SFYNVIDVKF (171 aa)). One can recognise a Chitin-binding type-3 domain in the interval 437-478 (AGTKVLASDGAIYQCKPFPYSGYCVQWTPTATQYQPGTGSHW).

This sequence belongs to the GbpA family.

The protein localises to the secreted. In terms of biological role, probably interacts with GlcNAc residues. May promote attachment to both epithelial cell surfaces and chitin. This Vibrio vulnificus (strain YJ016) protein is GlcNAc-binding protein A.